The sequence spans 249 residues: Vesicle-associated membrane protein-associated protein A (249 aa).

A2 is subject to N-acetylalanine. The Cytoplasmic segment spans residues 2 to 227; it reads ASASGAMAKH…VSFRDNVTSP (226 aa). Residues 14 to 131 enclose the MSP domain; it reads ILVLDPPSDL…MDSKLRCVFE (118 aa). Residues 50–53 are phosphorylated FFAT motif binding; that stretch reads KVKT. An N6-acetyllysine modification is found at K125. A compositionally biased stretch (basic and acidic residues) spans 135–144; the sequence is ENDKLNDMEP. Positions 135 to 166 are disordered; sequence ENDKLNDMEPSKAVPLNASKQDGPLPKPHSVS. A Phosphoserine modification is found at S166. The stretch at 168-207 forms a coiled coil; the sequence is NDTETRKLMEECKRLQGEMMKLSEENRHLRDEGLRLRKVA. T170 is modified (phosphothreonine). Phosphoserine is present on residues S214, S216, and S219. Residues 228 to 248 form a helical; Anchor for type IV membrane protein membrane-spanning segment; sequence LPSLLVVIAAIFIGFFLGKFI.

The protein belongs to the VAMP-associated protein (VAP) (TC 9.B.17) family. As to quaternary structure, homodimer; disulfide-linked. Heterodimer with VAPB. Interacts with VAMP1, VAMP2, STX1A, BET1, SEC22C and with the C-terminal domain of OCLN. Interacts (via MSP domain) with OSBPL1A (via FFAT motif). Interacts (via MSP domain) with ZFYVE27; may retain ZFYVE27 in the endoplasmic reticulum and regulate its function in cell projections formation. Interacts with OSBP. Interacts (via C-terminus) with RSAD2/viperin (via C-terminus). Interacts with IFITM3. Interacts with OSBPL3 (phosphorylated form). Interacts with KIF5A in a ZFYVE27-dependent manner. Interacts (via MSP domain) with STARD3 (via phosphorylated FFAT motif); this interaction recruits VAPA to the endosome. Interacts with STARD3NL (via FFAT motif). Interacts with CERT1. Interacts with PLEKHA3 and SACM1L to form a ternary complex. Interacts with VPS13A (via FFAT motif). Interacts with RB1CC1 (via phosphorylated FFAT motif), MIGA2 (via phosphorylated FFAT motif), RMDN3 (via phosphorylated FFAT motif), KCNB1 (via phosphorylated FFAT motif) and KCNB2 (via phosphorylated FFAT motif). Interacts (via MSP domain) with WDR44; the interactions connect the endoplasmic reticulum (ER) with the endosomal tubule. In terms of tissue distribution, ubiquitous.

The protein resides in the endoplasmic reticulum membrane. Its subcellular location is the cell membrane. It is found in the cell junction. It localises to the tight junction. The protein localises to the nucleus membrane. Endoplasmic reticulum (ER)-anchored protein that mediates the formation of contact sites between the ER and endosomes via interaction with FFAT motif-containing proteins such as STARD3 or WDR44. STARD3-VAPA interaction enables cholesterol transfer from the ER to endosomes. Via interaction with WDR44 participates in neosynthesized protein export. In addition, recruited to the plasma membrane through OSBPL3 binding. The OSBPL3-VAPA complex stimulates RRAS signaling which in turn attenuates integrin beta-1 (ITGB1) activation at the cell surface. With OSBPL3, may regulate ER morphology. May play a role in vesicle trafficking. The sequence is that of Vesicle-associated membrane protein-associated protein A from Rattus norvegicus (Rat).